The chain runs to 143 residues: MTDNLPEVREAQEWFRSETRRVAPITLDVMWDHFLSRHWSQLSPDFPLQEFVCYAREQVMTILPDSPPRFINLNNYLWSEQWLVRYRDMDFIQNVLNGMASRRPRLDALRDSWYDLDAHYDALETRFWQFYPRMMAQASHKAL.

The protein belongs to the AcpH family.

It catalyses the reaction holo-[ACP] + H2O = apo-[ACP] + (R)-4'-phosphopantetheine + H(+). In terms of biological role, converts holo-ACP to apo-ACP by hydrolytic cleavage of the phosphopantetheine prosthetic group from ACP. This is Putative acyl carrier protein phosphodiesterase (acpH) from Shigella flexneri.